Consider the following 96-residue polypeptide: Tenecin-3 (96 aa).

Positions 1–18 (MKTFVICLILVVAVSAAP) are cleaved as a signal peptide. Residues 19 to 96 (DHHDGHLGGH…HQGGYKTHGH (78 aa)) are disordered. 12 tandem repeats follow at residues 23–26 (GHLG), 31–34 (GHQG), 35–38 (GQQG), 39–42 (GHLG), 43–46 (GQQG), 47–50 (GHLG), 51–54 (GHQG), 59–62 (GHLG), 63–66 (GHQG), 67–70 (GIGG), 77–80 (GQHG), and 86–89 (GHQG). The segment at 23–89 (GHLGGHQTGH…GPGTGAGHQG (67 aa)) is 12 X 4 AA repeats of G-X-X-G. A compositionally biased stretch (gly residues) spans 26 to 89 (GGHQTGHQGG…GPGTGAGHQG (64 aa)).

To H.diomphalia holotricin 3.

The protein localises to the secreted. Its function is as follows. Antifungal heat stable protein produced in response to injury. It is active against C.albicans. No antibacterial activity against Gram-positive and Gram-negative bacteria. This chain is Tenecin-3, found in Tenebrio molitor (Yellow mealworm beetle).